A 298-amino-acid polypeptide reads, in one-letter code: Inosose dehydratase (298 aa).

Belongs to the IolE/MocC family. Requires glutathione as cofactor. The cofactor is Co(2+). It depends on Mn(2+) as a cofactor.

The enzyme catalyses scyllo-inosose = 3D-3,5/4-trihydroxycyclohexane-1,2-dione + H2O. Its function is as follows. Catalyzes the dehydration of inosose (2-keto-myo-inositol, 2KMI or 2,4,6/3,5-pentahydroxycyclohexanone) to 3D-(3,5/4)-trihydroxycyclohexane-1,2-dione (D-2,3-diketo-4-deoxy-epi-inositol). This chain is Inosose dehydratase, found in Histophilus somni (strain 129Pt) (Haemophilus somnus).